Reading from the N-terminus, the 636-residue chain is DNA ligase (636 aa).

The N6-AMP-lysine intermediate role is filled by Lys-113. The BRCT domain maps to 560–636 (NSEGIFQNQT…KSSFSKKFEK (77 aa)).

This sequence belongs to the NAD-dependent DNA ligase family.

It carries out the reaction NAD(+) + (deoxyribonucleotide)n-3'-hydroxyl + 5'-phospho-(deoxyribonucleotide)m = (deoxyribonucleotide)n+m + AMP + beta-nicotinamide D-nucleotide.. Functionally, catalyzes the formation of phosphodiester linkages between 5'-phosphoryl and 3'-hydroxyl groups in double-stranded DNA using NAD as a coenzyme and as the energy source for the reaction. The protein is DNA ligase of Acanthamoeba polyphaga (Amoeba).